The primary structure comprises 68 residues: uncharacterized protein (68 aa).

This is an uncharacterized protein from Escherichia coli O6:H1 (strain CFT073 / ATCC 700928 / UPEC).